Consider the following 417-residue polypeptide: mRNA export factor ICP27 homolog (417 aa).

A compositionally biased stretch (acidic residues) spans 1-28 (MEDIIEGGISSDDDFDSSDSSSDEEESD). A disordered region spans residues 1 to 143 (MEDIIEGGIS…NGPLRNGPPR (143 aa)). Positions 64-120 (RQRSPITWEHQSPLSRVYRSPSPMRFGKRPRISSNSTSRSCKTSWADRVREAAAQRR) are interaction with RNA. Residues 88–94 (RFGKRPR) carry the Nuclear localization signal motif. The span at 96 to 107 (SSNSTSRSCKTS) shows a compositional bias: low complexity. Residues 106 to 120 (TSWADRVREAAAQRR) are interaction with host ALYREF or mouse ALYREF2. Positions 108–117 (WADRVREAAA) are enriched in basic and acidic residues. A Nuclear localization signal motif is present at residues 118 to 127 (QRRPSRPFRK). The span at 120–130 (RPSRPFRKPYS) shows a compositional bias: basic residues. A compositionally biased stretch (low complexity) spans 132–141 (PRNGPLRNGP). The Zn(2+) site is built by Cys295, His385, Cys389, and Cys394. The CHC2-type zinc finger occupies 295–394 (CLMQTTPQDH…HLNKCPSSTC (100 aa)).

Belongs to the HHV-1 ICP27 protein family. As to quaternary structure, homodimer. Homodimerization is required for transactivation. Interacts with host ALYREF and with mouse ALYREF2. Associates in a complex with RNA, and host export factors NXF1/TAP and ALYREF or ALYREF2; these interactions allow nuclear export of viral transcripts.

The protein localises to the host cytoplasm. Its subcellular location is the host nucleus. In terms of biological role, probably acts as a viral splicing factor that regulates viral RNA splicing. Functions as a multifunctional regulator of the expression of viral lytic genes. Early protein that promotes the accumulation and nuclear export of viral intronless RNA transcripts by interacting with mRNAs and cellular export proteins. The sequence is that of mRNA export factor ICP27 homolog (EJRF1) from Saimiriine herpesvirus 2 (strain 11) (SaHV-2).